Consider the following 210-residue polypeptide: Large ribosomal subunit protein uL4 (210 aa).

The span at 44 to 54 shows a compositional bias: polar residues; sequence KRQGTASTLTR. The tract at residues 44-85 is disordered; it reads KRQGTASTLTRSEVRGGGRKPYKQKGTGRARQGSIRTPLRPG. Over residues 60–71 the composition is skewed to basic residues; the sequence is GGRKPYKQKGTG.

The protein belongs to the universal ribosomal protein uL4 family. In terms of assembly, part of the 50S ribosomal subunit.

One of the primary rRNA binding proteins, this protein initially binds near the 5'-end of the 23S rRNA. It is important during the early stages of 50S assembly. It makes multiple contacts with different domains of the 23S rRNA in the assembled 50S subunit and ribosome. In terms of biological role, forms part of the polypeptide exit tunnel. The sequence is that of Large ribosomal subunit protein uL4 from Prochlorococcus marinus (strain MIT 9301).